The following is a 384-amino-acid chain: 1-deoxy-D-xylulose 5-phosphate reductoisomerase (384 aa).

Residues T10, G11, S12, I13, G36, and N123 each contribute to the NADPH site. K124 serves as a coordination point for 1-deoxy-D-xylulose 5-phosphate. E125 is a binding site for NADPH. D149 lines the Mn(2+) pocket. S150, E151, S175, and H198 together coordinate 1-deoxy-D-xylulose 5-phosphate. E151 is a Mn(2+) binding site. G204 contacts NADPH. 4 residues coordinate 1-deoxy-D-xylulose 5-phosphate: S211, N216, K217, and E220. Position 220 (E220) interacts with Mn(2+).

Belongs to the DXR family. Mg(2+) is required as a cofactor. Requires Mn(2+) as cofactor.

It carries out the reaction 2-C-methyl-D-erythritol 4-phosphate + NADP(+) = 1-deoxy-D-xylulose 5-phosphate + NADPH + H(+). It functions in the pathway isoprenoid biosynthesis; isopentenyl diphosphate biosynthesis via DXP pathway; isopentenyl diphosphate from 1-deoxy-D-xylulose 5-phosphate: step 1/6. In terms of biological role, catalyzes the NADPH-dependent rearrangement and reduction of 1-deoxy-D-xylulose-5-phosphate (DXP) to 2-C-methyl-D-erythritol 4-phosphate (MEP). The sequence is that of 1-deoxy-D-xylulose 5-phosphate reductoisomerase from Chlorobium phaeovibrioides (strain DSM 265 / 1930) (Prosthecochloris vibrioformis (strain DSM 265)).